The sequence spans 337 residues: Large ribosomal subunit protein uL3 (337 aa).

Positions 1-29 (MPKINRPRRGSLAFSPRKRAQSPIPKYKS) are disordered.

This sequence belongs to the universal ribosomal protein uL3 family. Part of the 50S ribosomal subunit. Forms a cluster with proteins L14 and L24e.

Its function is as follows. One of the primary rRNA binding proteins, it binds directly near the 3'-end of the 23S rRNA, where it nucleates assembly of the 50S subunit. This Methanoregula boonei (strain DSM 21154 / JCM 14090 / 6A8) protein is Large ribosomal subunit protein uL3.